We begin with the raw amino-acid sequence, 511 residues long: Aldehyde dehydrogenase 2, mitochondrial (511 aa).

The N-terminal 21 residues, 1–21, are a transit peptide targeting the mitochondrion; sequence MSKSKTKTDKRNQSSLSRIKL. The tract at residues 72–92 is disordered; it reads VSEKSQHDSTEEDITQVSEKS. 274-279 is an NAD(+) binding site; the sequence is GSTLVG. E297 functions as the Proton acceptor in the catalytic mechanism. C331 (nucleophile) is an active-site residue.

Belongs to the aldehyde dehydrogenase family.

The protein resides in the mitochondrion matrix. The catalysed reaction is an aldehyde + NAD(+) + H2O = a carboxylate + NADH + 2 H(+). It participates in alcohol metabolism; ethanol degradation; acetate from ethanol: step 2/2. The protein is Aldehyde dehydrogenase 2, mitochondrial (ALD2) of Saccharomyces cerevisiae (Baker's yeast).